Reading from the N-terminus, the 834-residue chain is DNA gyrase subunit A (834 aa).

One can recognise a Topo IIA-type catalytic domain in the interval L53–L520. Y141 (O-(5'-phospho-DNA)-tyrosine intermediate) is an active-site residue. The GyrA-box motif lies at Q547–G553.

The protein belongs to the type II topoisomerase GyrA/ParC subunit family. In terms of assembly, heterotetramer, composed of two GyrA and two GyrB chains. In the heterotetramer, GyrA contains the active site tyrosine that forms a transient covalent intermediate with DNA, while GyrB binds cofactors and catalyzes ATP hydrolysis.

The protein resides in the cytoplasm. It carries out the reaction ATP-dependent breakage, passage and rejoining of double-stranded DNA.. A type II topoisomerase that negatively supercoils closed circular double-stranded (ds) DNA in an ATP-dependent manner to modulate DNA topology and maintain chromosomes in an underwound state. Negative supercoiling favors strand separation, and DNA replication, transcription, recombination and repair, all of which involve strand separation. Also able to catalyze the interconversion of other topological isomers of dsDNA rings, including catenanes and knotted rings. Type II topoisomerases break and join 2 DNA strands simultaneously in an ATP-dependent manner. The chain is DNA gyrase subunit A from Brachyspira hyodysenteriae (strain ATCC 49526 / WA1).